A 545-amino-acid chain; its full sequence is Beta-sesquiphellandrene synthase (545 aa).

The Mg(2+) site is built by Asp-299, Asp-303, Asn-443, Ser-447, and Glu-451. A DDXXD motif motif is present at residues Asp-299 to Asp-303.

The protein belongs to the terpene synthase family. The cofactor is Mg(2+). Requires Mn(2+) as cofactor.

The protein resides in the cytoplasm. It carries out the reaction (2E,6E)-farnesyl diphosphate = beta-sesquiphellandrene + diphosphate. It participates in secondary metabolite biosynthesis; terpenoid biosynthesis. In terms of biological role, sesquiterpene synthase converting farnesyl diphosphate into beta-sesquiphellandrene and six minor products, zingiberene, 7-epi-sesquithujene, sesquisabinene A, (E)-alpha-bergamotene, (E)-beta-farnesene and beta-bisabolene. Can also accept geranyl diphosphate as substrate, producing nine monoterpenes, with myrcene and limonene as the major products. The protein is Beta-sesquiphellandrene synthase (TPS2) of Sorghum bicolor (Sorghum).